Here is a 197-residue protein sequence, read N- to C-terminus: uncharacterized protein (197 aa).

4 consecutive transmembrane segments (helical) span residues 12 to 41, 78 to 100, 120 to 142, and 162 to 184; these read LCIF…WVLF, LIQG…TALS, VGVF…FGCV, and IRFA…IFRS.

It localises to the cell membrane. This is an uncharacterized protein from Treponema pallidum (strain Nichols).